Reading from the N-terminus, the 496-residue chain is Omega-crystallin (496 aa).

The protein belongs to the aldehyde dehydrogenase family. Lens.

Omega-crystallins are structural components of squids and octopi eye lens. Contains relatively little if any DHAL activity. In Enteroctopus dofleini (North Pacific giant octopus), this protein is Omega-crystallin.